A 287-amino-acid chain; its full sequence is ATP synthase subunit a (287 aa).

A run of 6 helical transmembrane segments spans residues 38-58 (DSMV…WTAA), 96-116 (FIAP…AMDM), 139-161 (VVPT…LRFW), 187-207 (PLFA…EYVA), 225-245 (LVFM…SGVL), and 259-279 (LFHI…ALIY).

Belongs to the ATPase A chain family. As to quaternary structure, F-type ATPases have 2 components, CF(1) - the catalytic core - and CF(0) - the membrane proton channel. CF(1) has five subunits: alpha(3), beta(3), gamma(1), delta(1), epsilon(1). CF(0) has three main subunits: a(1), b(2) and c(9-12). The alpha and beta chains form an alternating ring which encloses part of the gamma chain. CF(1) is attached to CF(0) by a central stalk formed by the gamma and epsilon chains, while a peripheral stalk is formed by the delta and b chains.

It is found in the cell inner membrane. In terms of biological role, key component of the proton channel; it plays a direct role in the translocation of protons across the membrane. The protein is ATP synthase subunit a of Verminephrobacter eiseniae (strain EF01-2).